Consider the following 340-residue polypeptide: Phenylalanine--tRNA ligase alpha subunit (340 aa).

Glu255 contributes to the Mg(2+) binding site.

Belongs to the class-II aminoacyl-tRNA synthetase family. Phe-tRNA synthetase alpha subunit type 1 subfamily. Tetramer of two alpha and two beta subunits. Mg(2+) is required as a cofactor.

The protein resides in the cytoplasm. The catalysed reaction is tRNA(Phe) + L-phenylalanine + ATP = L-phenylalanyl-tRNA(Phe) + AMP + diphosphate + H(+). In Desulforamulus reducens (strain ATCC BAA-1160 / DSM 100696 / MI-1) (Desulfotomaculum reducens), this protein is Phenylalanine--tRNA ligase alpha subunit.